A 261-amino-acid polypeptide reads, in one-letter code: tRNA pseudouridine synthase A (261 aa).

The active-site Nucleophile is the Asp-51. Tyr-109 is a substrate binding site.

This sequence belongs to the tRNA pseudouridine synthase TruA family. Homodimer.

The catalysed reaction is uridine(38/39/40) in tRNA = pseudouridine(38/39/40) in tRNA. Formation of pseudouridine at positions 38, 39 and 40 in the anticodon stem and loop of transfer RNAs. In Methylobacillus flagellatus (strain ATCC 51484 / DSM 6875 / VKM B-1610 / KT), this protein is tRNA pseudouridine synthase A.